A 263-amino-acid chain; its full sequence is Malonyl-[acyl-carrier protein] O-methyltransferase (263 aa).

It belongs to the methyltransferase superfamily.

The enzyme catalyses malonyl-[ACP] + S-adenosyl-L-methionine = malonyl-[ACP] methyl ester + S-adenosyl-L-homocysteine. The protein operates within cofactor biosynthesis; biotin biosynthesis. Converts the free carboxyl group of a malonyl-thioester to its methyl ester by transfer of a methyl group from S-adenosyl-L-methionine (SAM). It allows to synthesize pimeloyl-ACP via the fatty acid synthetic pathway. The protein is Malonyl-[acyl-carrier protein] O-methyltransferase of Chlorobium luteolum (strain DSM 273 / BCRC 81028 / 2530) (Pelodictyon luteolum).